The following is an 84-amino-acid chain: Small ribosomal subunit protein uS17 (84 aa).

This sequence belongs to the universal ribosomal protein uS17 family. As to quaternary structure, part of the 30S ribosomal subunit.

Its function is as follows. One of the primary rRNA binding proteins, it binds specifically to the 5'-end of 16S ribosomal RNA. This Glaesserella parasuis serovar 5 (strain SH0165) (Haemophilus parasuis) protein is Small ribosomal subunit protein uS17.